The chain runs to 312 residues: Metaxin-1 homolog (312 aa).

Residues 282-302 form a helical membrane-spanning segment; the sequence is ILFTIGALVLSVAFAIHTGLI.

The protein belongs to the metaxin family. In terms of assembly, associates with the mitochondrial contact site and cristae organizing system (MICOS) complex (also known as MINOS or MitOS complex).

The protein localises to the mitochondrion outer membrane. Functionally, involved in transport of proteins into the mitochondrion. Essential for embryonic development. This Caenorhabditis briggsae protein is Metaxin-1 homolog.